Here is a 641-residue protein sequence, read N- to C-terminus: Chaperone protein DnaK (641 aa).

At Thr200 the chain carries Phosphothreonine; by autocatalysis. Residues 605–623 are compositionally biased toward low complexity; sequence AAEQGGSADAASGNAQASK. Residues 605 to 627 form a disordered region; that stretch reads AAEQGGSADAASGNAQASKAADD.

Belongs to the heat shock protein 70 family.

In terms of biological role, acts as a chaperone. This Xanthomonas oryzae pv. oryzae (strain MAFF 311018) protein is Chaperone protein DnaK.